A 318-amino-acid polypeptide reads, in one-letter code: Taste receptor type 2 member 7 (318 aa).

Topologically, residues 1–9 (MADKVQTTL) are extracellular. A helical membrane pass occupies residues 10 to 30 (LFLAVGEFSVGILGNAFIGLV). The Cytoplasmic portion of the chain corresponds to 31-55 (NCMDWVKKRKIASIDLILTSLAISR). Residues 56 to 76 (ICLLCIILLDCFTLVLYPDVY) form a helical membrane-spanning segment. Over 77 to 94 (ATGKEMRIIDFFWTLTNH) the chain is Extracellular. Residues 95–115 (LSIWFATCLSIYYFFKIGNFF) traverse the membrane as a helical segment. Residues 116-128 (HPLFLWMKWRIDR) are Cytoplasmic-facing. The chain crosses the membrane as a helical span at residues 129-149 (VISWILLGCVVLSVFISLPAT). The Extracellular segment spans residues 150–187 (ENLNADFRFCVKAKRKTNLTWSCRVNKTQHASTKLFLN). N167 and N175 each carry an N-linked (GlcNAc...) asparagine glycan. The chain crosses the membrane as a helical span at residues 188-208 (LATLLPFCVCLMSFFLLILSL). Residues 209–235 (RRHIRRMQLSATGCRDPSTEAHVRALK) are Cytoplasmic-facing. Residues 236 to 256 (AVISFLLLFIAYYLSFLIATS) form a helical membrane-spanning segment. The Extracellular segment spans residues 257–266 (SYFMPETELA). Residues 267–287 (VIFGESIALIYPSSHSFILIL) traverse the membrane as a helical segment. Residues 288–318 (GNNKLRYVSLKVIWKVMSILKGRKFQQHKQI) lie on the Cytoplasmic side of the membrane.

Belongs to the G-protein coupled receptor T2R family.

It localises to the membrane. In terms of biological role, gustducin-coupled receptor implicated in the perception of bitter compounds in the oral cavity and the gastrointestinal tract. Signals through PLCB2 and the calcium-regulated cation channel TRPM5. The polypeptide is Taste receptor type 2 member 7 (TAS2R7) (Gorilla gorilla gorilla (Western lowland gorilla)).